The sequence spans 424 residues: Splicing factor 3B subunit 4 (424 aa).

A2 bears the N-acetylalanine mark. 2 consecutive RRM domains span residues 13-91 (ATVY…KASA) and 100-179 (ANIF…YAFK). Phosphotyrosine is present on Y56. The interval 207 to 424 (PHQLFADAPP…RGPLRGPLPQ (218 aa)) is disordered. Residues 222 to 231 (NPVVSSLGSG) show a composition bias toward low complexity. The segment covering 232–268 (LPPPGMPPPGSFPPPVPPPGALPPGIPPAMPPPPMPP) has biased composition (pro residues). Positions 303–323 (HPGMSQMQLAHHGPHGLGHPH) are enriched in low complexity. 2 stretches are compositionally biased toward pro residues: residues 332-381 (QPPP…PLMP) and 388-424 (PPRP…PLPQ).

Belongs to the SF3B4 family. In terms of assembly, component of the 17S U2 SnRNP complex, a ribonucleoprotein complex that contains small nuclear RNA (snRNA) U2 and a number of specific proteins. Part of the SF3B subcomplex of the 17S U2 SnRNP complex. SF3B associates with the splicing subcomplex SF3A and a 12S RNA unit to form the U2 small nuclear ribonucleoproteins complex (U2 snRNP). SF3B4 has been found in complex spliceosome 'B' and 'C' as well. Component of the minor (U12-type spliceosome) spliceosome. Found in a complex with PRMT9, SF3B2 and SF3B4.

The protein resides in the nucleus. In terms of biological role, component of the 17S U2 SnRNP complex of the spliceosome, a large ribonucleoprotein complex that removes introns from transcribed pre-mRNAs. The 17S U2 SnRNP complex (1) directly participates in early spliceosome assembly and (2) mediates recognition of the intron branch site during pre-mRNA splicing by promoting the selection of the pre-mRNA branch-site adenosine, the nucleophile for the first step of splicing. Within the 17S U2 SnRNP complex, SF3B4 is part of the SF3B subcomplex, which is required for 'A' complex assembly formed by the stable binding of U2 snRNP to the branchpoint sequence in pre-mRNA. Sequence independent binding of SF3A and SF3B subcomplexes upstream of the branch site is essential, it may anchor U2 snRNP to the pre-mRNA. May also be involved in the assembly of the 'E' complex. Also acts as a component of the minor spliceosome, which is involved in the splicing of U12-type introns in pre-mRNAs. This chain is Splicing factor 3B subunit 4 (Sf3b4), found in Rattus norvegicus (Rat).